We begin with the raw amino-acid sequence, 333 residues long: Complement C1q and tumor necrosis factor-related protein 9 (333 aa).

A signal peptide spans 1-19 (MRIWWLLLVMGACTRSVFS). The segment at 22-194 (TCRQGHSGIP…GDRGEKGKVG (173 aa)) is disordered. Collagen-like domains are found at residues 24–82 (RQGH…DGRV), 84–130 (AKGI…KGEV), and 134–193 (GPEG…KGKV). 4-hydroxyproline occurs at positions 31, 34, and 40. A compositionally biased stretch (basic and acidic residues) spans 42–57 (RDGRDGAKGDKGDAGE). Pro58, Pro61, and Pro64 each carry 4-hydroxyproline. A compositionally biased stretch (basic and acidic residues) spans 67-88 (DGIRGEKGEPGADGRVEAKGIK). Lys73 bears the 5-hydroxylysine mark. Lys73 carries an O-linked (Gal...) hydroxylysine glycan. Residues Pro76 and Pro115 each carry the 4-hydroxyproline modification. At Lys127 the chain carries 5-hydroxylysine. O-linked (Gal...) hydroxylysine glycosylation is present at Lys127. 4-hydroxyproline is present on residues Pro151, Pro160, and Pro175. The segment covering 183-193 (WKGDRGEKGKV) has biased composition (basic and acidic residues). The C1q domain maps to 197 to 333 (PLVPKSAFTV…FTGFLLFSSS (137 aa)).

As to quaternary structure, multimers (predominantly trimers). Interacts with ADIPOQ via the C1q domain to form a heterotrimeric complex. Post-translationally, the isomeric forms of the hydroxylated amino acids could not be determined in the mass-spectrometric methods reported in PubMed:18787108 but are assumed on the basis of their occurrence in collagen-like domains. As to expression, expressed predominantly in adipose tissue. Females express higher levels than males.

The protein resides in the secreted. In terms of biological role, probable adipokine. Activates AMPK, AKT, and p44/42 MAPK signaling pathways. The protein is Complement C1q and tumor necrosis factor-related protein 9 (C1qtnf9) of Mus musculus (Mouse).